Consider the following 152-residue polypeptide: UPF0756 membrane protein JDM1_1594 (152 aa).

The next 4 helical transmembrane spans lie at 25–45, 52–72, 85–105, and 115–135; these read ATVV…LTTI, WGVT…QIGF, WIAV…VGLL, and LVFG…GPII.

It belongs to the UPF0756 family.

It is found in the cell membrane. This Lactiplantibacillus plantarum (strain JDM1) (Lactobacillus plantarum) protein is UPF0756 membrane protein JDM1_1594.